A 146-amino-acid chain; its full sequence is MTPELKSLGAKTPYIFEYNSQLLEAFPNPNPNLDPLITLECKEFTSLCPITSQPDFGIIYIRYIPKDKMVESKSLKLYLFSYRNHGSFHESCINTILLDLVQLLEPKYLEVYGDFASRGGIAIKPFVNYAIKEYQEFKEKRLLNAK.

The Thioimide intermediate role is filled by Cys-48. Asp-55 (proton donor) is an active-site residue. Residues 70–72 and 89–90 each bind substrate; these read VES and HE.

This sequence belongs to the GTP cyclohydrolase I family. QueF type 1 subfamily.

The protein localises to the cytoplasm. The enzyme catalyses 7-aminomethyl-7-carbaguanine + 2 NADP(+) = 7-cyano-7-deazaguanine + 2 NADPH + 3 H(+). The protein operates within tRNA modification; tRNA-queuosine biosynthesis. Its function is as follows. Catalyzes the NADPH-dependent reduction of 7-cyano-7-deazaguanine (preQ0) to 7-aminomethyl-7-deazaguanine (preQ1). The polypeptide is NADPH-dependent 7-cyano-7-deazaguanine reductase (Helicobacter pylori (strain Shi470)).